Here is a 399-residue protein sequence, read N- to C-terminus: Large envelope protein (399 aa).

Residue Met-1 is modified to N-acetylmethionine. A lipid anchor (N-myristoyl glycine; by host) is attached at Gly-2. Positions 2-118 are pre-S1; the sequence is GLSWTVPLEW…PPLRDTHPQA (117 aa). The pre-S stretch occupies residues 2 to 173; sequence GLSWTVPLEW…FSRIGDPAPN (172 aa). Residues 2 to 180 lie on the Virion surface; in external conformation side of the membrane; sequence GLSWTVPLEW…APNMEGITSG (179 aa). Over 2–252 the chain is Intravirion; in internal conformation; sequence GLSWTVPLEW…PGYRWMCLRR (251 aa). N-linked (GlcNAc...) asparagine glycosylation is present at Ser-4. A disordered region spans residues 85-109; it reads KTLPADPPPASTNRQSGRQPTPITP. Polar residues predominate over residues 95-105; that stretch reads STNRQSGRQPT. The tract at residues 119-173 is pre-S2; the sequence is MQWNSTTFHQALQDPRVRGLYFPAGGSSSGTVNPVPTTASLISSIFSRIGDPAPN. Residues 181-201 traverse the membrane as a helical segment; it reads FLGPLLVLQAGFFLLTKILTI. Residues 202-252 are Intravirion; in external conformation-facing; that stretch reads PQSLDSWWTSLNFLGGAPVCLGQNSQSPTSNHSPTSCPPICPGYRWMCLRR. A helical membrane pass occupies residues 253–273; sequence FIIFLFILLLCLIFLLVLLGY. At 274-347 the chain is on the virion surface side; the sequence is QGMLPVCPLI…WASARFSWLS (74 aa). Asn-319 is a glycosylation site (N-linked (GlcNAc...) asparagine; by host). The chain crosses the membrane as a helical span at residues 348–368; sequence LLVPFVQWFAGLSPTVWLSVI. The Intravirion segment spans residues 369 to 374; the sequence is WMMWYW. The chain crosses the membrane as a helical span at residues 375–397; it reads GPSLYNILSPFIPLLPIFFCLWV. The Virion surface segment spans residues 398-399; sequence YI.

Belongs to the orthohepadnavirus major surface antigen family. In terms of assembly, in its internal form (Li-HBsAg), interacts with the capsid protein and with the isoform S. Interacts with host chaperone CANX. Associates with host chaperone CANX through its pre-S2 N glycan; this association may be essential for isoform M proper secretion. As to quaternary structure, interacts with isoform L. Interacts with the antigens of satellite virus HDV (HDVAgs); this interaction is required for encapsidation of HDV genomic RNA. Isoform M is N-terminally acetylated by host at a ratio of 90%, and N-glycosylated by host at the pre-S2 region. In terms of processing, myristoylated.

The protein localises to the virion membrane. In terms of biological role, the large envelope protein exists in two topological conformations, one which is termed 'external' or Le-HBsAg and the other 'internal' or Li-HBsAg. In its external conformation the protein attaches the virus to cell receptors and thereby initiating infection. This interaction determines the species specificity and liver tropism. This attachment induces virion internalization predominantly through caveolin-mediated endocytosis. The large envelope protein also assures fusion between virion membrane and endosomal membrane. In its internal conformation the protein plays a role in virion morphogenesis and mediates the contact with the nucleocapsid like a matrix protein. The middle envelope protein plays an important role in the budding of the virion. It is involved in the induction of budding in a nucleocapsid independent way. In this process the majority of envelope proteins bud to form subviral lipoprotein particles of 22 nm of diameter that do not contain a nucleocapsid. The sequence is that of Large envelope protein from Hepatitis B virus genotype E (isolate Cote d'Ivoire/ABI-129/2003) (HBV-E).